The following is a 171-amino-acid chain: Ly6/PLAUR domain-containing protein 6 (171 aa).

A signal peptide spans 1-25; the sequence is MEPSPALAWLLLLSLVADCLKAAQS. Residues 47–141 enclose the UPAR/Ly6 domain; it reads FKCFTCEKAA…PRNDTDATFA (95 aa). 6 disulfide bridges follow: cysteine 49-cysteine 77, cysteine 52-cysteine 61, cysteine 70-cysteine 96, cysteine 102-cysteine 121, cysteine 107-cysteine 118, and cysteine 122-cysteine 127. The short motif at 88-90 is the NxI motif element; the sequence is NSI. 2 N-linked (GlcNAc...) asparagine glycosylation sites follow: asparagine 134 and asparagine 147. Asparagine 147 carries the GPI-anchor amidated asparagine lipid modification. The propeptide at 148–171 is removed in mature form; the sequence is QTNGHPHCVSVIVSCLWVWLGLTL.

In terms of assembly, interacts with nicotinic acetylcholine receptors (nAChRs) including CHRNA3, CHRNA4, CHRNA5, CHRNA6, CHRNA7, CHRNB2 and CHRNB4. Interacts (via NxI motif) with LRP6. As to expression, expressed at high levels in the cortex and cerebellum of the brain, at moderate levels in the lung, kidney, and liver, and at low levels in the heart and prostate (at protein level). Expressed in neurons (at protein level).

The protein resides in the secreted. It is found in the cytoplasm. The protein localises to the cell membrane. It localises to the synapse. Its subcellular location is the synaptosome. The protein resides in the membrane raft. It is found in the cell projection. The protein localises to the dendrite. It localises to the perikaryon. Functionally, acts as a modulator of nicotinic acetylcholine receptors (nAChRs) function in the brain. Inhibits nicotine-induced Ca(2+) influx through nAChRs. In vitro, specifically inhibits alpha-3:beta-4 and alpha-7 nAChR currents in an allosteric manner. Acts as a positive regulator of Wnt/beta-catenin signaling. This chain is Ly6/PLAUR domain-containing protein 6 (Lypd6), found in Rattus norvegicus (Rat).